The sequence spans 483 residues: Sodium/pantothenate symporter (483 aa).

The Periplasmic segment spans residues 1-2; the sequence is MQ. Residues 3–23 traverse the membrane as a helical segment; sequence LEVILPLVAYLVVVFGISVYA. Residues 24–42 are Cytoplasmic-facing; that stretch reads MRKRSTGTFLNEYFLGSRS. Residues 43–63 traverse the membrane as a helical segment; sequence MGGIVLAMTLTATYISASSFI. Topologically, residues 64 to 73 are periplasmic; it reads GGPGAAYKYG. Residues 74–94 form a helical membrane-spanning segment; the sequence is LGWVLLAMIQLPAVWLSLGIL. At 95–123 the chain is on the cytoplasmic side; that stretch reads GKKFAILARRYNAVTLNDMLFARYQSRLL. The chain crosses the membrane as a helical span at residues 124–144; sequence VWLASLSLLVAFVGAMTVQFI. The Periplasmic segment spans residues 145–157; it reads GGARLLETAAGIP. A helical transmembrane segment spans residues 158 to 178; the sequence is YETGLLIFGISIALYTAFGGF. Residues 179 to 189 lie on the Cytoplasmic side of the membrane; it reads RASVLNDTMQG. Residues 190–210 form a helical membrane-spanning segment; that stretch reads LVMLIGTVVLLIGVVHAAGGL. Residues 211-232 are Periplasmic-facing; sequence SNAVQTLQTIDPQLVTPQGADD. Residues 233 to 253 traverse the membrane as a helical segment; that stretch reads ILSPAFMTSFWVLVCFGVIGL. Over 254–272 the chain is Cytoplasmic; that stretch reads PHTAVRCISYKDSKAVHRG. Residues 273–293 traverse the membrane as a helical segment; it reads IIIGTIVVAILMFGMHLAGAL. Residues 294 to 305 lie on the Periplasmic side of the membrane; the sequence is GRAVIPDLTVPD. A helical membrane pass occupies residues 306-326; that stretch reads LVIPTLMVKVLPPFAAGIFLA. The Cytoplasmic segment spans residues 327 to 368; that stretch reads APMAAIMSTINAQLLQSSATIIKDLYLNIRPDQMQNETRLKR. Residues 369–389 traverse the membrane as a helical segment; sequence MSAVITLVLGALLLLAAWKPP. Topologically, residues 390 to 391 are periplasmic; the sequence is EM. A helical transmembrane segment spans residues 392–412; that stretch reads IIWLNLLAFGGLEAVFLWPLV. The Cytoplasmic portion of the chain corresponds to 413–423; the sequence is LGLYWERANAK. The chain crosses the membrane as a helical span at residues 424 to 444; the sequence is GALSAMIVGGVLYAVLATLNI. A topological domain (periplasmic) is located at residue Gln-445. Residues 446 to 466 form a helical membrane-spanning segment; it reads YLGFHPIVPSLLLSLLAFLVG. The Cytoplasmic portion of the chain corresponds to 467 to 483; sequence NRFGTSVPQATVLTTDK.

It belongs to the sodium:solute symporter (SSF) (TC 2.A.21) family.

It is found in the cell inner membrane. The enzyme catalyses (R)-pantothenate(in) + Na(+)(in) = (R)-pantothenate(out) + Na(+)(out). With respect to regulation, pantothenate uptake is not reduced in osmotically shocked cells or by ATP depletion with arsenate, but is reduced greater than 90% by the dissipation of the membrane electrochemical gradient with 2,4-dinitrophenol. In terms of biological role, catalyzes the sodium-dependent uptake of extracellular pantothenate. The chain is Sodium/pantothenate symporter from Escherichia coli (strain K12).